We begin with the raw amino-acid sequence, 120 residues long: MSFFESGSMDVSSFDLTLLVLHVWQYTGYSNKYICDTLPKGKQLGIPNFKKLQRKLKSKNKFIGTLEGKILNLDLSNPHRFNTCEYNSQHGKNQLESIVRMAGSPQSLKIREDEFREMCE.

This is an uncharacterized protein from Acanthamoeba polyphaga mimivirus (APMV).